Reading from the N-terminus, the 349-residue chain is Mitogen-activated protein kinase sty1 (349 aa).

Positions Tyr-20 to Leu-299 constitute a Protein kinase domain. ATP is bound by residues Ile-26–Val-34 and Lys-49. Asp-141 (proton acceptor) is an active-site residue. Position 171 is a phosphothreonine (Thr-171). Residues Thr-171 to Tyr-173 carry the TXY motif. Tyr-173 is subject to Phosphotyrosine. The residue at position 175 (Ser-175) is a Phosphoserine. Thr-176 bears the Phosphothreonine mark. The short motif at Thr-176 to Tyr-178 is the TXY element.

This sequence belongs to the protein kinase superfamily. Ser/Thr protein kinase family. MAP kinase subfamily. HOG1 sub-subfamily. Interacts with cdc37, cmk2, hal4, sin1 and srk1. Mg(2+) is required as a cofactor. In terms of processing, dually phosphorylated on Thr-171 and Tyr-173, which activates the enzyme. Phosphorylated by wis1 in response to osmotic stress, nutrient limitation, hydrogen peroxide and arsenite. Dephosphorylated by pyp1 and pyp2.

Its subcellular location is the cytoplasm. The protein resides in the nucleus. It carries out the reaction L-seryl-[protein] + ATP = O-phospho-L-seryl-[protein] + ADP + H(+). The enzyme catalyses L-threonyl-[protein] + ATP = O-phospho-L-threonyl-[protein] + ADP + H(+). With respect to regulation, activated by the MAPK kinase wisl, and negatively regulated by pypl and pyp2 tyrosine phosphatases. Its function is as follows. Proline-directed serine/threonine-protein kinase involved in a signal transduction pathway that is activated by changes in the osmolarity of the extracellular environment. Controls osmotic regulation of transcription of target genes. Involved in osmoregulation and stress response pathways leading to an efficient start of sexual differentiation. Supports translation initiation and facilitates adaptation to environmental stress in part through reducing eIF2-alpha phosphorylation. Links the cell-cycle G2/M control with changes in the extracellular environment that affect cell physiology. Phosphorylates atf1 and mkp1. In conjunction with hal4, has a role in the cellular resistance to toxic cations such as Na(+), Li(+) and Ca(2+). Involved in resistance to arsenite, methylglyoxal and hydrogen peroxide. Involved in induction of thermotolerance in mRNA export, as well as in vacuolar fission. The chain is Mitogen-activated protein kinase sty1 (sty1) from Schizosaccharomyces pombe (strain 972 / ATCC 24843) (Fission yeast).